The chain runs to 262 residues: Adenosylcobinamide-GDP ribazoletransferase (262 aa).

The next 8 helical transmembrane spans lie at 4–21 (AWSGFLLSVQFLTVIPIR), 37–57 (AFPLVGALIGVIEAVTYFIFS), 62–82 (LSPLFLALSLMWLSIWIAGGL), 112–132 (VGAFAVLSILCLLSFRFLFVF), 141–161 (IFLISVIPLLSRTAMAWLLIY), 181–201 (YDAHVAMIIGNCLLACLCAIH), 202–222 (FSVWKTVIFLACGTIFAVFVA), and 236–256 (DALGAFVEGVETWLWCMIWLL).

The protein belongs to the CobS family. The cofactor is Mg(2+).

It is found in the cell membrane. It catalyses the reaction alpha-ribazole + adenosylcob(III)inamide-GDP = adenosylcob(III)alamin + GMP + H(+). The enzyme catalyses alpha-ribazole 5'-phosphate + adenosylcob(III)inamide-GDP = adenosylcob(III)alamin 5'-phosphate + GMP + H(+). It functions in the pathway cofactor biosynthesis; adenosylcobalamin biosynthesis; adenosylcobalamin from cob(II)yrinate a,c-diamide: step 7/7. Joins adenosylcobinamide-GDP and alpha-ribazole to generate adenosylcobalamin (Ado-cobalamin). Also synthesizes adenosylcobalamin 5'-phosphate from adenosylcobinamide-GDP and alpha-ribazole 5'-phosphate. The chain is Adenosylcobinamide-GDP ribazoletransferase from Geobacillus sp. (strain WCH70).